The chain runs to 1565 residues: Major cell-surface adhesin PAc (1565 aa).

Positions 1-38 are cleaved as a signal peptide; sequence MKVKKTYGFRKSKISKTLCGAVLGTVAAVSVAGQKVFA. The segment covering 42–54 has biased composition (low complexity); the sequence is TTTSDVDTKVVGT. Residues 42-81 are disordered; that stretch reads TTTSDVDTKVVGTQTGNPATNLPEAQGSASKEAEQSQTKL. A compositionally biased stretch (basic and acidic residues) spans 72–81; the sequence is KEAEQSQTKL. 4 Ag I/II A repeats span residues 146-220, 221-302, 303-384, and 385-466; these read KKTT…QKTN, AANQ…QEAN, AANE…KKAN, and AANE…QKDL. Positions 203 to 448 are heptad repeats of Y-[EQ]-X-X-L-A-X; that stretch reads EAKLAQYQAD…KRNADAKADY (246 aa). Residues 461–834 form a V-region (lectin-like) region; it reads KYQKDLADYP…VNVPKVTKEK (374 aa). Disordered stretches follow at residues 827 to 985 and 1486 to 1511; these read VPKV…PTPP and NTVKTTTPEDPADPTDPQDPSSPRTS. The stretch at 848-887 is one P1 repeat; that stretch reads TYETEKPLKPAPVAPNYEKEPTPPTRTPDQAEPNKPTPPT. A P2 repeat occupies 888–926; sequence YETEKPLEPAPVEPSYEAEPTPPTRTPDQAEPNKPTPPT. The P3 repeat unit spans residues 927-964; sequence YETEKPLEPAPVEPSYEAEPTPPTPTPDQPEPNKPVEP. The span at 946 to 961 shows a compositional bias: pro residues; the sequence is PTPPTPTPDQPEPNKP. The LPXTG sorting signal signature appears at 1532 to 1536; sequence LPNTG. Thr-1535 is subject to Pentaglycyl murein peptidoglycan amidated threonine. Residues 1536-1565 constitute a propeptide, removed by sortase; the sequence is GVTNNAYMPLLGIIGLVTSFSLLGLKAKKD.

Belongs to the antigen I/II family.

It localises to the secreted. Its subcellular location is the cell wall. Its function is as follows. Surface protein antigen implicated in dental caries. The sequence is that of Major cell-surface adhesin PAc from Streptococcus mutans.